The sequence spans 1179 residues: uncharacterized protein (1179 aa).

This is an uncharacterized protein from Ictaluridae (bullhead catfishes).